The primary structure comprises 156 residues: Small ribosomal subunit protein uS7 (156 aa).

The protein belongs to the universal ribosomal protein uS7 family. As to quaternary structure, part of the 30S ribosomal subunit. Contacts proteins S9 and S11.

In terms of biological role, one of the primary rRNA binding proteins, it binds directly to 16S rRNA where it nucleates assembly of the head domain of the 30S subunit. Is located at the subunit interface close to the decoding center, probably blocks exit of the E-site tRNA. The protein is Small ribosomal subunit protein uS7 of Crocosphaera subtropica (strain ATCC 51142 / BH68) (Cyanothece sp. (strain ATCC 51142)).